The sequence spans 1026 residues: Multidrug resistance protein MdtC (1026 aa).

Helical transmembrane passes span 15 to 35 (ILIAAAITLCGILGFRLLPVA), 333 to 353 (EVEETLAISVALVILVVFLFL), 360 to 380 (LIPAVAVPVSLIGTFAAMYLC), 387 to 407 (LSLMALTIATGFVVDDAIVVL), 431 to 451 (VGFTVISMSLSLVAVFLPLLL), 463 to 483 (FAVTLSVAIGISLVVSLTLTP), 528 to 548 (LVGVVFLGTVALNIWLYIAIP), 853 to 873 (LILIVAAIATVYIVLGILYES), 897 to 917 (LFNAPFSLIALIGIMLLIGIV), 953 to 973 (PIMMTTLAALFGALPLVLSDG), and 984 to 1004 (ITIVGGLVMSQLLTLYTTPVV).

It belongs to the resistance-nodulation-cell division (RND) (TC 2.A.6) family. MdtC subfamily. As to quaternary structure, part of a tripartite efflux system composed of MdtA, MdtB and MdtC. MdtC forms a heteromultimer with MdtB.

It localises to the cell inner membrane. The sequence is that of Multidrug resistance protein MdtC from Salmonella heidelberg (strain SL476).